Reading from the N-terminus, the 261-residue chain is Hemin import ATP-binding protein HmuV (261 aa).

The ABC transporter domain maps to 5–241 (YTAENLTFTR…DALAHWYGAQ (237 aa)). 37–44 (GPNGAGKS) contacts ATP.

The protein belongs to the ABC transporter superfamily. Heme (hemin) importer (TC 3.A.1.14.5) family. The complex is composed of two ATP-binding proteins (HmuV), two transmembrane proteins (HmuU) and a solute-binding protein (HmuT).

Its subcellular location is the cell inner membrane. Part of the ABC transporter complex HmuTUV involved in hemin import. Responsible for energy coupling to the transport system. The protein is Hemin import ATP-binding protein HmuV of Enterobacter cloacae.